A 22-amino-acid chain; its full sequence is Bacteriocin serracin-P 23 kDa subunit (22 aa).

Its function is as follows. Major component of a prophage tail tube. Functionally, antibacterial activity against Gram-negative bacterium E.amylovora. This is Bacteriocin serracin-P 23 kDa subunit from Serratia plymuthica.